The following is a 378-amino-acid chain: Alkaline elastase YaB (378 aa).

An N-terminal signal peptide occupies residues 1–27 (MNKKMGKIVAGTALIISVAFSSSIAQA). The propeptide occupies 28–110 (AEEAKEKYLI…IEEDAEVTTM (83 aa)). Residue glutamine 111 participates in Ca(2+) binding. Residues 114-377 (PWGINRVQAP…SGLVNAEAAT (264 aa)) form the Peptidase S8 domain. Aspartate 141 acts as the Charge relay system in catalysis. Aspartate 149 contributes to the Ca(2+) binding site. The Charge relay system role is filled by histidine 171. The Ca(2+) site is built by leucine 182, asparagine 184, isoleucine 186, valine 188, alanine 272, tyrosine 274, and alanine 277. Catalysis depends on serine 324, which acts as the Charge relay system.

This sequence belongs to the peptidase S8 family. Ca(2+) is required as a cofactor.

Its subcellular location is the secreted. Digests elastin efficiently, has a substrate preference for Ala in P1 position. This Bacillus sp. (strain YaB) protein is Alkaline elastase YaB (ale).